The sequence spans 587 residues: Envelope glycoprotein (587 aa).

The signal sequence occupies residues 1 to 22 (MNFNHHFTWSLVIISQIFQVQA). Residues 23 to 527 (GFGDPREALL…TGFHGLLPYV (505 aa)) are Extracellular-facing. N-linked (GlcNAc...) asparagine; by host glycans are attached at residues Asn-120 and Asn-237. Positions 248-251 (CWLC) match the CXXC motif. 3 cysteine pairs are disulfide-bonded: Cys-248/Cys-251, Cys-248/Cys-484, and Cys-476/Cys-483. N-linked (GlcNAc...) asparagine; by host glycosylation is found at Asn-266, Asn-271, Asn-277, Asn-280, Asn-295, Asn-308, Asn-322, Asn-328, Asn-340, and Asn-358. The fusion peptide stretch occupies residues 399 to 419 (FIPLVIGLGITTAVSTGTAGL). Coiled coils occupy residues 420–470 (GVSL…LLTA) and 480–516 (QEKCCFYANKSGIVRDKIKNLQDDLEKRRKQLIDNPF). The segment at 459–475 (LQNRRGLDLLTAEQGGI) is immunosuppression. Positions 476 to 484 (CLALQEKCC) match the CX6CC motif. A glycan (N-linked (GlcNAc...) asparagine; by host) is linked at Asn-488. Residues 528 to 548 (MPLLGPLLCLLLVLSFGPIIF) traverse the membrane as a helical segment. Over 549–587 (NKLMTFIKHQIESIQAKPIQVHYHRLEQEDHGGSYLNLT) the chain is Cytoplasmic. The YXXL motif; contains endocytosis signal motif lies at 571–574 (YHRL).

The mature envelope protein (Env) consists of a trimer of SU-TM heterodimers attached by a labile interchain disulfide bond. Post-translationally, specific enzymatic cleavages in vivo yield mature proteins. Envelope glycoproteins are synthesized as an inactive precursor that is N-glycosylated and processed likely by host cell furin or by a furin-like protease in the Golgi to yield the mature SU and TM proteins. The cleavage site between SU and TM requires the minimal sequence [KR]-X-[KR]-R. The R-peptide is released from the C-terminus of the cytoplasmic tail of the TM protein upon particle formation as a result of proteolytic cleavage by the viral protease. Cleavage of this peptide is required for TM to become fusogenic. The CXXC motif is highly conserved across a broad range of retroviral envelope proteins. It is thought to participate in the formation of a labile disulfide bond possibly with the CX6CC motif present in the transmembrane protein. Isomerization of the intersubunit disulfide bond to an SU intrachain disulfide bond is thought to occur upon receptor recognition in order to allow membrane fusion.

The protein resides in the virion membrane. It is found in the host cell membrane. In terms of biological role, the surface protein (SU) attaches the virus to the host cell by binding to its receptor. This interaction triggers the refolding of the transmembrane protein (TM) and is thought to activate its fusogenic potential by unmasking its fusion peptide. Fusion occurs at the host cell plasma membrane. Its function is as follows. The transmembrane protein (TM) acts as a class I viral fusion protein. Under the current model, the protein has at least 3 conformational states: pre-fusion native state, pre-hairpin intermediate state, and post-fusion hairpin state. During viral and target cell membrane fusion, the coiled coil regions (heptad repeats) assume a trimer-of-hairpins structure, positioning the fusion peptide in close proximity to the C-terminal region of the ectodomain. The formation of this structure appears to drive apposition and subsequent fusion of viral and target cell membranes. Membranes fusion leads to delivery of the nucleocapsid into the cytoplasm. The polypeptide is Envelope glycoprotein (env) (Simian retrovirus SRV-1).